A 445-amino-acid chain; its full sequence is 3-phosphoshikimate 1-carboxyvinyltransferase (445 aa).

A disordered region spans residues 1–25 (MTDSNQPTPLQARKSGALHGTARVP). 3-phosphoshikimate contacts are provided by K28, S29, and R33. Position 28 (K28) interacts with phosphoenolpyruvate. Phosphoenolpyruvate-binding residues include G101 and R129. 3-phosphoshikimate contacts are provided by S175, Q177, D328, and K355. Q177 lines the phosphoenolpyruvate pocket. D328 serves as the catalytic Proton acceptor. R359 and R402 together coordinate phosphoenolpyruvate.

Belongs to the EPSP synthase family. Monomer.

The protein resides in the cytoplasm. The catalysed reaction is 3-phosphoshikimate + phosphoenolpyruvate = 5-O-(1-carboxyvinyl)-3-phosphoshikimate + phosphate. The protein operates within metabolic intermediate biosynthesis; chorismate biosynthesis; chorismate from D-erythrose 4-phosphate and phosphoenolpyruvate: step 6/7. In terms of biological role, catalyzes the transfer of the enolpyruvyl moiety of phosphoenolpyruvate (PEP) to the 5-hydroxyl of shikimate-3-phosphate (S3P) to produce enolpyruvyl shikimate-3-phosphate and inorganic phosphate. The sequence is that of 3-phosphoshikimate 1-carboxyvinyltransferase from Rhodopseudomonas palustris (strain TIE-1).